The sequence spans 442 residues: GPI mannosyltransferase 1 (442 aa).

Transmembrane regions (helical) follow at residues 22–42, 95–115, 177–197, 242–262, 307–327, 336–356, 361–381, and 408–428; these read INLTKSIFIVGLVIRLVLIVF, ILIHPAFGKLLFVICDMIIAY, LASIFYGLSVHFKIYPIIYSI, AFTFISLTFIMYLIYGYIFLF, MIVALASFLPQVILLLAITLV, LLLETITFVAFNKVCTVQYFI, ILPLVIPSSSLGLVQYIILFA, and IWVAGLLFFIANIYILVKLIL.

Belongs to the PIGM family.

The protein resides in the endoplasmic reticulum membrane. It participates in glycolipid biosynthesis; glycosylphosphatidylinositol-anchor biosynthesis. Functionally, mannosyltransferase involved in glycosylphosphatidylinositol-anchor biosynthesis. Transfers the first alpha-1,4-mannose to GlcN-acyl-PI during GPI precursor assembly. This Dictyostelium discoideum (Social amoeba) protein is GPI mannosyltransferase 1 (pigm).